A 207-amino-acid chain; its full sequence is Ribosomal RNA large subunit methyltransferase E (207 aa).

Residues glycine 60, tryptophan 62, aspartate 80, aspartate 96, and aspartate 121 each coordinate S-adenosyl-L-methionine. Residue lysine 161 is the Proton acceptor of the active site.

The protein belongs to the class I-like SAM-binding methyltransferase superfamily. RNA methyltransferase RlmE family.

It is found in the cytoplasm. It carries out the reaction uridine(2552) in 23S rRNA + S-adenosyl-L-methionine = 2'-O-methyluridine(2552) in 23S rRNA + S-adenosyl-L-homocysteine + H(+). Its function is as follows. Specifically methylates the uridine in position 2552 of 23S rRNA at the 2'-O position of the ribose in the fully assembled 50S ribosomal subunit. The protein is Ribosomal RNA large subunit methyltransferase E of Marinobacter nauticus (strain ATCC 700491 / DSM 11845 / VT8) (Marinobacter aquaeolei).